A 287-amino-acid polypeptide reads, in one-letter code: Nucleotide-binding protein mma_3120 (287 aa).

An ATP-binding site is contributed by G8 to S15. GTP is bound at residue D57–S60.

This sequence belongs to the RapZ-like family.

Its function is as follows. Displays ATPase and GTPase activities. The polypeptide is Nucleotide-binding protein mma_3120 (Janthinobacterium sp. (strain Marseille) (Minibacterium massiliensis)).